The primary structure comprises 164 residues: Phosphopantetheine adenylyltransferase (164 aa).

Ser11 contacts substrate. ATP is bound by residues Ser11 to Phe12 and His19. Substrate-binding residues include Lys43, Ala76, and Arg90. ATP-binding positions include Gly91–Arg93, Glu101, and Tyr126–Ser132.

This sequence belongs to the bacterial CoaD family. Homohexamer. It depends on Mg(2+) as a cofactor.

The protein localises to the cytoplasm. It catalyses the reaction (R)-4'-phosphopantetheine + ATP + H(+) = 3'-dephospho-CoA + diphosphate. The protein operates within cofactor biosynthesis; coenzyme A biosynthesis; CoA from (R)-pantothenate: step 4/5. Its function is as follows. Reversibly transfers an adenylyl group from ATP to 4'-phosphopantetheine, yielding dephospho-CoA (dPCoA) and pyrophosphate. The polypeptide is Phosphopantetheine adenylyltransferase (Streptococcus gordonii (strain Challis / ATCC 35105 / BCRC 15272 / CH1 / DL1 / V288)).